A 214-amino-acid polypeptide reads, in one-letter code: Coiled-coil domain-containing protein 169 (214 aa).

Residues S56–K138 adopt a coiled-coil conformation. The interval M154–P214 is disordered. Composition is skewed to polar residues over residues T155–R166 and H185–A195.

This sequence belongs to the CCDC169 family.

The protein is Coiled-coil domain-containing protein 169 (Ccdc169) of Mus musculus (Mouse).